The primary structure comprises 148 residues: DnaJ homolog subfamily C member 24 (148 aa).

The J domain maps to 10–81 (DWYSILGADP…ETKKKYDLQR (72 aa)). The 56-residue stretch at 92 to 147 (VDAQVRLEEMSWNQGDESFFLSCRCGGKYTVSKDEAQEATLISCDACSLIVELLHQ) folds into the DPH-type MB domain. Residues C114, C116, C135, and C138 each contribute to the Zn(2+) site.

It belongs to the DPH4 family. Monomer and homooligomer. Iron binding promotes oligomerization. Detected in heart, brain, spleen, lung, liver, kidney and testis.

It is found in the cytoplasm. It localises to the cytoskeleton. It participates in protein modification; peptidyl-diphthamide biosynthesis. Its function is as follows. The iron-bound form is redox-active and can function as electron carrier. Stimulates the ATPase activity of several Hsp70-type chaperones. This ability is enhanced by iron-binding. Plays a role in the diphthamide biosynthesis, a post-translational modification of histidine which occurs in translation elongation factor 2 (EEF2). This Mus musculus (Mouse) protein is DnaJ homolog subfamily C member 24 (Dnajc24).